The sequence spans 118 residues: Ferredoxin-thioredoxin reductase, catalytic chain (118 aa).

Cys56 is a binding site for [4Fe-4S] cluster. Catalysis depends on Cys58, which acts as the Nucleophile. An intrachain disulfide couples Cys58 to Cys88. Residues Cys75, Cys77, and Cys86 each coordinate [4Fe-4S] cluster.

The protein belongs to the ferredoxin thioredoxin reductase beta subunit family. As to quaternary structure, heterodimer of subunit A (variable subunit) and subunit B (catalytic subunit). Heterodimeric FTR forms a complex with ferredoxin and thioredoxin. Requires [4Fe-4S] cluster as cofactor.

The catalysed reaction is [thioredoxin]-disulfide + 2 reduced [2Fe-2S]-[ferredoxin] + 2 H(+) = [thioredoxin]-dithiol + 2 oxidized [2Fe-2S]-[ferredoxin]. Functionally, catalytic subunit of the ferredoxin-thioredoxin reductase (FTR), which catalyzes the two-electron reduction of thioredoxins by the electrons provided by reduced ferredoxin. This is Ferredoxin-thioredoxin reductase, catalytic chain from Synechocystis sp. (strain ATCC 27184 / PCC 6803 / Kazusa).